A 306-amino-acid polypeptide reads, in one-letter code: D-alanine--D-alanine ligase (306 aa).

The ATP-grasp domain occupies 101–303; sequence KLVWQALGLP…FSQLVARILM (203 aa). Residue 134–189 participates in ATP binding; it reads VAKLGLPLIVKPSHEGSSVGMSKVDHASELQKALVEAFQHDSDVLIEKWLSGPEFT. Positions 257, 270, and 272 each coordinate Mg(2+).

It belongs to the D-alanine--D-alanine ligase family. The cofactor is Mg(2+). Mn(2+) serves as cofactor.

It is found in the cytoplasm. It catalyses the reaction 2 D-alanine + ATP = D-alanyl-D-alanine + ADP + phosphate + H(+). It functions in the pathway cell wall biogenesis; peptidoglycan biosynthesis. Its function is as follows. Cell wall formation. In Yersinia pseudotuberculosis serotype O:1b (strain IP 31758), this protein is D-alanine--D-alanine ligase.